Here is a 202-residue protein sequence, read N- to C-terminus: P25 protein (202 aa).

Residues 7–195 (VAIVIYSTYG…EIARIQGETF (189 aa)) enclose the Flavodoxin-like domain. The residue at position 181 (S181) is a Phosphoserine.

It belongs to the WrbA family. In terms of assembly, homodimer.

Unknown. Target of pap1 transcription factor. Confers brefeldin A resistance in S.pombe. This is P25 protein (obr1) from Schizosaccharomyces pombe (strain 972 / ATCC 24843) (Fission yeast).